Reading from the N-terminus, the 296-residue chain is Nucleotide-binding protein SEQ_0857 (296 aa).

13–20 is an ATP binding site; it reads GMSGAGKT. 63–66 lines the GTP pocket; that stretch reads DMRS.

The protein belongs to the RapZ-like family.

Its function is as follows. Displays ATPase and GTPase activities. This Streptococcus equi subsp. equi (strain 4047) protein is Nucleotide-binding protein SEQ_0857.